Here is a 209-residue protein sequence, read N- to C-terminus: Large ribosomal subunit protein uL3 (209 aa).

An N5-methylglutamine modification is found at glutamine 150.

It belongs to the universal ribosomal protein uL3 family. Part of the 50S ribosomal subunit. Forms a cluster with proteins L14 and L19. Methylated by PrmB.

One of the primary rRNA binding proteins, it binds directly near the 3'-end of the 23S rRNA, where it nucleates assembly of the 50S subunit. The sequence is that of Large ribosomal subunit protein uL3 from Aliivibrio salmonicida (strain LFI1238) (Vibrio salmonicida (strain LFI1238)).